The sequence spans 142 residues: uncharacterized protein (142 aa).

2 helical membrane-spanning segments follow: residues 75–97 (VFFRKISFFTPLYFLLLSPYIVA) and 107–124 (LSIVLPVAVLYFSAKLFY).

It is found in the cell membrane. This is an uncharacterized protein from Archaeoglobus fulgidus (strain ATCC 49558 / DSM 4304 / JCM 9628 / NBRC 100126 / VC-16).